Consider the following 207-residue polypeptide: LexA repressor (207 aa).

The segment at residues Arg28–Lys48 is a DNA-binding region (H-T-H motif). Active-site for autocatalytic cleavage activity residues include Ser123 and Lys160.

Belongs to the peptidase S24 family. Homodimer.

The catalysed reaction is Hydrolysis of Ala-|-Gly bond in repressor LexA.. Functionally, represses a number of genes involved in the response to DNA damage (SOS response), including recA and lexA. In the presence of single-stranded DNA, RecA interacts with LexA causing an autocatalytic cleavage which disrupts the DNA-binding part of LexA, leading to derepression of the SOS regulon and eventually DNA repair. This is LexA repressor from Haemophilus influenzae (strain ATCC 51907 / DSM 11121 / KW20 / Rd).